The primary structure comprises 427 residues: MMQNDLSVFNEYESEVRSYVRGFPTVFHQAKGYKLWDLDGKEYVDFFSGAGALNYGHNDENMKQKLLTYIQEDGVTHSLDMATKAKGEFIDAFQNIILKPRNMDYKIMFPGPTGANSVESALKLARKVTGRTNVVSFTNGFHGMTIGALSVTGNKFKRNGAGMPLSNTSTLPYDQFLKESNNSIEYIENFLDNGGSGLDKPAAFIVETVQGEGGLNAASSEWLRSIEKICRERDIKLILDDVQAGVGRTGTFFSFEPAGIKPDFVCLSKSIGGNGSPLAITLVAPEYDKFAPGEHNGTFRGNNFAFVTGTEALNYWKDDRLEKNVQEKSERITSFLDDMIKKHPEMKGVRKGRGFMQGIMSPIEDLADNIAGRCFEHGLIMETAGAEDEVFKLFPPITIDDEGLERGLSILQQAIEEVTAESNLVAK.

N6-(pyridoxal phosphate)lysine is present on Lys-269.

It belongs to the class-III pyridoxal-phosphate-dependent aminotransferase family. Pyridoxal 5'-phosphate serves as cofactor.

It carries out the reaction L-2,4-diaminobutanoate + 2-oxoglutarate = L-aspartate 4-semialdehyde + L-glutamate. It functions in the pathway amine and polyamine biosynthesis; ectoine biosynthesis; L-ectoine from L-aspartate 4-semialdehyde: step 1/3. Its function is as follows. Catalyzes reversively the conversion of L-aspartate beta-semialdehyde (ASA) to L-2,4-diaminobutyrate (DABA) by transamination with L-glutamate. The polypeptide is Diaminobutyrate--2-oxoglutarate transaminase (ectB) (Marinococcus halophilus).